Reading from the N-terminus, the 844-residue chain is Lysine-specific histone demethylase 1 homolog 1 (844 aa).

Residues Met-1–Gly-18 are compositionally biased toward basic and acidic residues. Residues Met-1–Arg-131 are disordered. Residues Pro-26–Asn-40 show a composition bias toward acidic residues. Polar residues-rich tracts occupy residues Ala-46 to Gln-62 and Asp-107 to Asn-118. Residues Gly-154–Ala-255 form the SWIRM domain. FAD is bound by residues Glu-295, Arg-297, and Arg-303. Positions Leu-516 to Phe-523 match the Nuclear localization signal motif. Glu-679 is a binding site for FAD.

This sequence belongs to the flavin monoamine oxidase family. In terms of assembly, interacts with CZS. Interacts with OTU6/OTLD1. The cofactor is FAD. Expressed in the shoot and root apical regions of young seedlings. Expressed in cotyledons and inflorescences.

The protein localises to the nucleus. Its subcellular location is the cytoplasm. In terms of biological role, probable histone demethylase that reduces the levels of histone H3 'Lys-4' methylation in chromatin of the floral repressor FLOWERING LOCUS C (FLC) and the sporophytically silenced floral repressor FWA. Seems to act in partial redundancy with FLOWERING LOCUS D (FLD) to repress FLC expression. Required for cytosine methylation of FWA. Controls primary seed dormancy by regulating DOG1 and abscisic acid signaling-related genes. In association with OTU6/OTLD1, involved in transcriptional gene repression via histone deubiquitination and demethylation. The protein is Lysine-specific histone demethylase 1 homolog 1 of Arabidopsis thaliana (Mouse-ear cress).